Reading from the N-terminus, the 238-residue chain is Fmr1 neighbor protein (238 aa).

The segment at 1–30 (MPSDRRPSQRRNRSKSRDYRGARSKVTRAD) is disordered. The Cytoplasmic segment spans residues 1–79 (MPSDRRPSQR…CLQYLWARRH (79 aa)). Residues 15-30 (KSRDYRGARSKVTRAD) are compositionally biased toward basic and acidic residues. A helical transmembrane segment spans residues 80-100 (LGLLLLLFWTLVILFRPVNTA). The Extracellular segment spans residues 101 to 178 (KLPILAEAAE…VRDKPTQVLR (78 aa)). The P-type domain occupies 118 to 176 (MLDFFFPTACIIRDNQVVVACNNQPYLSESECLKSKCCSSTSGTIIKCYAPVRDKPTQV). A helical transmembrane segment spans residues 179–199 (VFGLAAISILVLGFLPMCCCS). The Cytoplasmic portion of the chain corresponds to 200-238 (MCWRRKRMNRMLKVLKKQKSKGKKPKGRKASEERALLSH). Residues 214–227 (LKKQKSKGKKPKGR) show a composition bias toward basic residues. Residues 214 to 238 (LKKQKSKGKKPKGRKASEERALLSH) are disordered. Basic and acidic residues predominate over residues 228–238 (KASEERALLSH).

It localises to the membrane. This Mus musculus (Mouse) protein is Fmr1 neighbor protein.